Reading from the N-terminus, the 40-residue chain is Protein YneP (40 aa).

The sequence is that of Protein YneP from Escherichia coli (strain K12).